The chain runs to 215 residues: Small ribosomal subunit protein uS7 (215 aa).

The protein belongs to the universal ribosomal protein uS7 family. As to quaternary structure, part of the 30S ribosomal subunit.

Functionally, one of the primary rRNA binding proteins, it binds directly to 16S rRNA where it nucleates assembly of the head domain of the 30S subunit. Is located at the subunit interface close to the decoding center. This Pyrococcus abyssi (strain GE5 / Orsay) protein is Small ribosomal subunit protein uS7.